The following is a 1196-amino-acid chain: Chromosome partition protein Smc (1196 aa).

ATP is bound at residue 32–39 (PNGSGKSN). 2 coiled-coil regions span residues 168-288 (LKHR…SVQQ) and 327-497 (DALE…LERK). The SMC hinge domain occupies 510–621 (AGILGPMAKL…VDDLDRALAL (112 aa)). Coiled coils occupy residues 654 to 829 (LEVT…RAQQ) and 972 to 1026 (DRPT…KDLL).

Belongs to the SMC family. As to quaternary structure, homodimer.

Its subcellular location is the cytoplasm. In terms of biological role, required for chromosome condensation and partitioning. In Mycolicibacterium paratuberculosis (strain ATCC BAA-968 / K-10) (Mycobacterium paratuberculosis), this protein is Chromosome partition protein Smc.